The sequence spans 477 residues: Bifunctional protein HldE (477 aa).

Residues 1–318 (MKLSMPRFDQ…RAIQREEGSE (318 aa)) form a ribokinase region. 194–197 (NLSE) is an ATP binding site. The active site involves Asp-263. Residues 343–477 (FTNGCFDILH…EKIRKTDKAE (135 aa)) form a cytidylyltransferase region.

It in the N-terminal section; belongs to the carbohydrate kinase PfkB family. In the C-terminal section; belongs to the cytidylyltransferase family. Homodimer.

It carries out the reaction D-glycero-beta-D-manno-heptose 7-phosphate + ATP = D-glycero-beta-D-manno-heptose 1,7-bisphosphate + ADP + H(+). The enzyme catalyses D-glycero-beta-D-manno-heptose 1-phosphate + ATP + H(+) = ADP-D-glycero-beta-D-manno-heptose + diphosphate. It functions in the pathway nucleotide-sugar biosynthesis; ADP-L-glycero-beta-D-manno-heptose biosynthesis; ADP-L-glycero-beta-D-manno-heptose from D-glycero-beta-D-manno-heptose 7-phosphate: step 1/4. It participates in nucleotide-sugar biosynthesis; ADP-L-glycero-beta-D-manno-heptose biosynthesis; ADP-L-glycero-beta-D-manno-heptose from D-glycero-beta-D-manno-heptose 7-phosphate: step 3/4. In terms of biological role, catalyzes the phosphorylation of D-glycero-D-manno-heptose 7-phosphate at the C-1 position to selectively form D-glycero-beta-D-manno-heptose-1,7-bisphosphate. Catalyzes the ADP transfer from ATP to D-glycero-beta-D-manno-heptose 1-phosphate, yielding ADP-D-glycero-beta-D-manno-heptose. The sequence is that of Bifunctional protein HldE from Pseudomonas fluorescens (strain ATCC BAA-477 / NRRL B-23932 / Pf-5).